The chain runs to 176 residues: ATP-dependent protease subunit HslV (176 aa).

The active site involves Thr-5. Ser-161, Cys-164, and Thr-167 together coordinate Na(+).

It belongs to the peptidase T1B family. HslV subfamily. In terms of assembly, a double ring-shaped homohexamer of HslV is capped on each side by a ring-shaped HslU homohexamer. The assembly of the HslU/HslV complex is dependent on binding of ATP.

It is found in the cytoplasm. The enzyme catalyses ATP-dependent cleavage of peptide bonds with broad specificity.. Its activity is regulated as follows. Allosterically activated by HslU binding. Functionally, protease subunit of a proteasome-like degradation complex believed to be a general protein degrading machinery. This is ATP-dependent protease subunit HslV from Desulfitobacterium hafniense (strain DSM 10664 / DCB-2).